The following is a 1345-amino-acid chain: Aldehyde oxidase 2 (1345 aa).

Positions 9–96 (DDLEFFVNGR…GAAVTTVEGV (88 aa)) constitute a 2Fe-2S ferredoxin-type domain. Residues C48, C53, C56, and C78 each contribute to the [2Fe-2S] cluster site. Q117 lines the Mo-molybdopterin pocket. 4 residues coordinate [2Fe-2S] cluster: C118, C121, C153, and C155. A Mo-molybdopterin-binding site is contributed by C155. One can recognise an FAD-binding PCMH-type domain in the interval 238–423 (FYGERITWIA…GSVYIPHSQK (186 aa)). Residues 266-273 (LISGNTAL), A347, S356, H360, D369, and L413 each bind FAD. Mo-molybdopterin-binding positions include 812 to 813 (GF), 1094 to 1097 (ASVG), Q1209, and L1274. E1276 serves as the catalytic Proton acceptor; for azaheterocycle hydroxylase activity.

This sequence belongs to the xanthine dehydrogenase family. In terms of assembly, homodimer. Requires [2Fe-2S] cluster as cofactor. FAD is required as a cofactor. Mo-molybdopterin serves as cofactor. Expressed in olfactory mucosa epithelium (at protein level). Detected in skin.

The protein resides in the cytoplasm. The enzyme catalyses an aldehyde + O2 + H2O = a carboxylate + H2O2 + H(+). Oxidase with broad substrate specificity, oxidizing aromatic azaheterocycles, such as phthalazine, as well as aldehydes, such as benzaldehyde and retinal. Cannot use hypoxanthine as substrate. This Mus musculus (Mouse) protein is Aldehyde oxidase 2 (Aox2).